The following is a 381-amino-acid chain: Translation initiation factor eIF2B subunit beta (381 aa).

A disordered region spans residues 125-148; it reads LQKPEQPHQNRKNSSGSSSMKTKT. The span at 136–145 shows a compositional bias: polar residues; it reads KNSSGSSSMK.

Belongs to the eIF-2B alpha/beta/delta subunits family. Component of the translation initiation factor 2B (eIF2B) complex which is a heterodecamer of two sets of five different subunits: alpha, beta, gamma, delta and epsilon. Subunits alpha, beta and delta comprise a regulatory subcomplex and subunits epsilon and gamma comprise a catalytic subcomplex. Within the complex, the hexameric regulatory complex resides at the center, with the two heterodimeric catalytic subcomplexes bound on opposite sides.

The protein resides in the cytoplasm. It is found in the cytosol. Acts as a component of the translation initiation factor 2B (eIF2B) complex, which catalyzes the exchange of GDP for GTP on the eukaryotic initiation factor 2 (eIF2) complex gamma subunit. Its guanine nucleotide exchange factor activity is repressed when bound to eIF2 complex phosphorylated on the alpha subunit, thereby limiting the amount of methionyl-initiator methionine tRNA available to the ribosome and consequently global translation is repressed. It activates the synthesis of GCN4 in yeast under amino acid starvation conditions by suppressing the inhibitory effects of multiple AUG codons present in the leader of GCN4 mRNA. It may promote either repression or activation of GCN4 expression depending on amino acid availability. GCD6 and GCD7 repress GCN4 expression at the translational level by ensuring that ribosomes which have translated UORF1 will reinitiate at UORF2, -3, or -4 and thus fail to reach the GCN4 start site. The protein is Translation initiation factor eIF2B subunit beta (GCD7) of Saccharomyces cerevisiae (strain ATCC 204508 / S288c) (Baker's yeast).